The sequence spans 515 residues: RNA-splicing ligase RtcB homolog (515 aa).

Mn(2+) contacts are provided by aspartate 121, cysteine 124, histidine 229, histidine 269, and histidine 363. A GMP-binding site is contributed by 228 to 232; it reads NHYGE. Residues 363 to 364, 412 to 415, serine 419, 438 to 441, and lysine 514 contribute to the GMP site; these read HN, GGTM, and HGSG. The active-site GMP-histidine intermediate is histidine 438.

The protein belongs to the RtcB family. In terms of assembly, catalytic component of the tRNA-splicing ligase complex. Mn(2+) serves as cofactor.

It carries out the reaction a 3'-end 3'-phospho-ribonucleotide-RNA + a 5'-end dephospho-ribonucleoside-RNA + GTP = a ribonucleotidyl-ribonucleotide-RNA + GMP + diphosphate. The catalysed reaction is a 3'-end 2',3'-cyclophospho-ribonucleotide-RNA + a 5'-end dephospho-ribonucleoside-RNA + GTP + H2O = a ribonucleotidyl-ribonucleotide-RNA + GMP + diphosphate + H(+). Functionally, catalytic subunit of the tRNA-splicing ligase complex that acts by directly joining spliced tRNA halves to mature-sized tRNAs by incorporating the precursor-derived splice junction phosphate into the mature tRNA as a canonical 3',5'-phosphodiester. May act as an RNA ligase with broad substrate specificity, and may function toward other RNAs. This chain is RNA-splicing ligase RtcB homolog, found in Theileria annulata.